The primary structure comprises 162 residues: Putative ripening-related protein 7 (162 aa).

Residues 1-30 (MAAAAASTKIVAVVVAVLLAILEMPSCAVA) form the signal peptide.

It belongs to the kiwellin family.

It is found in the secreted. This chain is Putative ripening-related protein 7, found in Oryza sativa subsp. japonica (Rice).